Reading from the N-terminus, the 153-residue chain is Endoribonuclease YbeY (153 aa).

H114, H118, and H124 together coordinate Zn(2+).

Belongs to the endoribonuclease YbeY family. Zn(2+) is required as a cofactor.

The protein localises to the cytoplasm. Its function is as follows. Single strand-specific metallo-endoribonuclease involved in late-stage 70S ribosome quality control and in maturation of the 3' terminus of the 16S rRNA. This is Endoribonuclease YbeY from Shewanella baltica (strain OS185).